The following is a 316-amino-acid chain: MLP-like protein 34 (316 aa).

The protein belongs to the MLP family.

The sequence is that of MLP-like protein 34 (MLP34) from Arabidopsis thaliana (Mouse-ear cress).